We begin with the raw amino-acid sequence, 498 residues long: ATP synthase subunit beta, chloroplastic (498 aa).

172–179 (GGAGVGKT) is a binding site for ATP.

This sequence belongs to the ATPase alpha/beta chains family. As to quaternary structure, F-type ATPases have 2 components, CF(1) - the catalytic core - and CF(0) - the membrane proton channel. CF(1) has five subunits: alpha(3), beta(3), gamma(1), delta(1), epsilon(1). CF(0) has four main subunits: a(1), b(1), b'(1) and c(9-12).

The protein resides in the plastid. It localises to the chloroplast thylakoid membrane. The enzyme catalyses ATP + H2O + 4 H(+)(in) = ADP + phosphate + 5 H(+)(out). Functionally, produces ATP from ADP in the presence of a proton gradient across the membrane. The catalytic sites are hosted primarily by the beta subunits. The protein is ATP synthase subunit beta, chloroplastic of Sorghum bicolor (Sorghum).